The sequence spans 2327 residues: Kielin/chordin-like protein (2327 aa).

A signal peptide spans 1–19 (MNTLLWTILLPLLFSFCVC). The disordered stretch occupies residues 250-294 (LPLPYSLSGERQMEDEEIQREPRAPDLSDTDHYQQQQSEVPAQLL). Residues 268–281 (QREPRAPDLSDTDH) show a composition bias toward basic and acidic residues. Positions 291-332 (AQLLAKDDRLQRLEEAVKGLTNMIDMIKSQNADLQARVIALE) form a coiled coil. VWFC domains follow at residues 339–400 (STCV…SVGP), 401–438 (CMSC…PLCA), 439–493 (TGCS…AKCQ), 494–553 (QGCE…PSCP), 554–610 (VCEL…LDCS), 611–669 (ACEM…SQCQ), 670–728 (SCMD…PMCD), 729–786 (GCLY…PRCE), 787–847 (GCEY…PSCD), 848–907 (VCDF…PVCK), 908–966 (VCVQ…PVCD), 967–1025 (SCSY…AKCP), 1026–1083 (DCRY…NNCN), 1084–1142 (GCNY…PQCP), 1146–1203 (ADCP…RSCD), 1204–1260 (GCLM…KECQ), 1261–1319 (DCQY…PVCD), 1321–1377 (CSYN…CPIC), 1378–1439 (QGCH…DGCN), 1440–1495 (YSGR…PRCT), 1496–1555 (GICK…PVCD), 1556–1614 (RCFY…RECP), 1615–1673 (VCRY…PRCR), 1674–1731 (GCVY…PVCA), 1732–1799 (DCIS…SSCA), 1800–1860 (QALS…PVCN), 1861–1924 (ECVV…HECQ), and 1928–1988 (VSCW…PHCI). The VWFD domain occupies 1992–2168 (ATCIAFGDPH…SSNDSSSSCW (177 aa)). 2 disulfide bridges follow: Cys-1994–Cys-2126 and Cys-2016–Cys-2167. The TIL domain maps to 2259–2319 (CPHDRGYVFD…ESHCIPPESC (61 aa)).

The protein localises to the secreted. In terms of biological role, may be a signaling molecule that mediates inductive activities of the embryonic midline. Able to dorsalize mesoderm. The protein is Kielin/chordin-like protein (kcp) of Xenopus laevis (African clawed frog).